The primary structure comprises 230 residues: DNA repair protein rdl1 (230 aa).

As to quaternary structure, interacts with rlp1 and sws1.

The protein localises to the cytoplasm. It is found in the nucleus. Involved in homologous recombination where it functions at an early stage of recombination in a pre-recombinogenic complex with rlp1 and sws1. Also has a role at a later stage of recombination in association with the rhp55-rhp57 complex. The chain is DNA repair protein rdl1 (rdl1) from Schizosaccharomyces pombe (strain 972 / ATCC 24843) (Fission yeast).